The sequence spans 59 residues: Cytochrome c oxidase subunit 9, mitochondrial (59 aa).

Residues 2 to 8 (TIAPITG) are Mitochondrial matrix-facing. The helical transmembrane segment at 9–44 (TIKRRVIMDIVLGFSLGGVMASYWWWGFHMDKINKR) threads the bilayer. The Mitochondrial intermembrane segment spans residues 45-56 (EKFYAELAERKK). Positions 57-59 (QEN) are cleaved as a propeptide — removed in mature form.

It belongs to the fungal cytochrome c oxidase subunit 7a family. As to quaternary structure, component of the cytochrome c oxidase (complex IV, CIV), a multisubunit enzyme composed of 12 subunits. The complex is composed of a catalytic core of 3 subunits COX1, COX2 and COX3, encoded in the mitochondrial DNA, and 9 supernumerary subunits COX4, COX5A (or COX5B), COX6, COX7, COX8, COX9, COX12, COX13 and COX26, which are encoded in the nuclear genome. The complex exists as a monomer or a dimer and forms supercomplexes (SCs) in the inner mitochondrial membrane with a dimer of ubiquinol-cytochrome c oxidoreductase (cytochrome b-c1 complex, complex III, CIII), resulting in 2 different assemblies (supercomplexes III(2)IV and III(2)IV(2)).

It is found in the mitochondrion inner membrane. The protein operates within energy metabolism; oxidative phosphorylation. Component of the cytochrome c oxidase, the last enzyme in the mitochondrial electron transport chain which drives oxidative phosphorylation. The respiratory chain contains 3 multisubunit complexes succinate dehydrogenase (complex II, CII), ubiquinol-cytochrome c oxidoreductase (cytochrome b-c1 complex, complex III, CIII) and cytochrome c oxidase (complex IV, CIV), that cooperate to transfer electrons derived from NADH and succinate to molecular oxygen, creating an electrochemical gradient over the inner membrane that drives transmembrane transport and the ATP synthase. Cytochrome c oxidase is the component of the respiratory chain that catalyzes the reduction of oxygen to water. Electrons originating from reduced cytochrome c in the intermembrane space (IMS) are transferred via the dinuclear copper A center (CU(A)) of COX2 and heme A of COX1 to the active site in COX1, a binuclear center (BNC) formed by heme A3 and copper B (CU(B)). The BNC reduces molecular oxygen to 2 water molecules using 4 electrons from cytochrome c in the IMS and 4 protons from the mitochondrial matrix. This Saccharomyces cerevisiae (strain ATCC 204508 / S288c) (Baker's yeast) protein is Cytochrome c oxidase subunit 9, mitochondrial (COX9).